We begin with the raw amino-acid sequence, 245 residues long: 1-(5-phosphoribosyl)-5-[(5-phosphoribosylamino)methylideneamino] imidazole-4-carboxamide isomerase 1 (245 aa).

Asp-7 acts as the Proton acceptor in catalysis. Asp-129 (proton donor) is an active-site residue.

This sequence belongs to the HisA/HisF family.

The protein resides in the cytoplasm. It carries out the reaction 1-(5-phospho-beta-D-ribosyl)-5-[(5-phospho-beta-D-ribosylamino)methylideneamino]imidazole-4-carboxamide = 5-[(5-phospho-1-deoxy-D-ribulos-1-ylimino)methylamino]-1-(5-phospho-beta-D-ribosyl)imidazole-4-carboxamide. It functions in the pathway amino-acid biosynthesis; L-histidine biosynthesis; L-histidine from 5-phospho-alpha-D-ribose 1-diphosphate: step 4/9. The polypeptide is 1-(5-phosphoribosyl)-5-[(5-phosphoribosylamino)methylideneamino] imidazole-4-carboxamide isomerase 1 (hisA1) (Photorhabdus laumondii subsp. laumondii (strain DSM 15139 / CIP 105565 / TT01) (Photorhabdus luminescens subsp. laumondii)).